Here is a 422-residue protein sequence, read N- to C-terminus: ATP phosphoribosyltransferase regulatory subunit (422 aa).

It belongs to the class-II aminoacyl-tRNA synthetase family. HisZ subfamily. As to quaternary structure, heteromultimer composed of HisG and HisZ subunits.

The protein resides in the cytoplasm. It functions in the pathway amino-acid biosynthesis; L-histidine biosynthesis; L-histidine from 5-phospho-alpha-D-ribose 1-diphosphate: step 1/9. Its function is as follows. Required for the first step of histidine biosynthesis. May allow the feedback regulation of ATP phosphoribosyltransferase activity by histidine. The sequence is that of ATP phosphoribosyltransferase regulatory subunit from Clostridium botulinum (strain 657 / Type Ba4).